A 184-amino-acid chain; its full sequence is ATP synthase subunit b, chloroplastic (184 aa).

A helical membrane pass occupies residues 27–49 (LATNLINLSVVLGVLIFFGKGVL).

It belongs to the ATPase B chain family. As to quaternary structure, F-type ATPases have 2 components, F(1) - the catalytic core - and F(0) - the membrane proton channel. F(1) has five subunits: alpha(3), beta(3), gamma(1), delta(1), epsilon(1). F(0) has four main subunits: a(1), b(1), b'(1) and c(10-14). The alpha and beta chains form an alternating ring which encloses part of the gamma chain. F(1) is attached to F(0) by a central stalk formed by the gamma and epsilon chains, while a peripheral stalk is formed by the delta, b and b' chains.

The protein resides in the plastid. The protein localises to the chloroplast thylakoid membrane. In terms of biological role, f(1)F(0) ATP synthase produces ATP from ADP in the presence of a proton or sodium gradient. F-type ATPases consist of two structural domains, F(1) containing the extramembraneous catalytic core and F(0) containing the membrane proton channel, linked together by a central stalk and a peripheral stalk. During catalysis, ATP synthesis in the catalytic domain of F(1) is coupled via a rotary mechanism of the central stalk subunits to proton translocation. Component of the F(0) channel, it forms part of the peripheral stalk, linking F(1) to F(0). The sequence is that of ATP synthase subunit b, chloroplastic from Spinacia oleracea (Spinach).